Here is a 105-residue protein sequence, read N- to C-terminus: Small ribosomal subunit protein uS10 (105 aa).

It belongs to the universal ribosomal protein uS10 family. As to quaternary structure, part of the 30S ribosomal subunit.

In terms of biological role, involved in the binding of tRNA to the ribosomes. The sequence is that of Small ribosomal subunit protein uS10 from Chlamydia pneumoniae (Chlamydophila pneumoniae).